The chain runs to 352 residues: MVVDDSAVVRQVLVGVLNDAPGIDVIATAADPLLAIEKMRQHWPDVIVLDVEMPRMDGITFLRKIMSERPTPVVICSTLTEKGARVTMDALAAGAVAVVTKPRLGLKQFLTDSADELVATVRSAARANVKRLAARVTAAPLEAEVKHTADVILPAQSGRALAQTTERIVAIGTSTGGTQALEEVLTALPRVCPGIVIVQHMPEKFTAAFAARLNGLCQIAVKEAANNDRVMPGRALIAPGGKHLLLRRSGAQYFVEVLEGPPVNRHRPSVDVLFRSAARAAGSNALGIIMTGMGDDGAAGLLEMRQAGARTVAQDEHTSIVFGMPKEAIKRGGADRILPLGAMAREIVTQLQ.

The Response regulatory domain occupies 1–116; sequence MVVDDSAVVR…KQFLTDSADE (116 aa). D50 carries the 4-aspartylphosphate modification. The region spanning 162–352 is the CheB-type methylesterase domain; that stretch reads AQTTERIVAI…MAREIVTQLQ (191 aa). Active-site residues include S174, H200, and D296.

This sequence belongs to the CheB family. Phosphorylated by CheA. Phosphorylation of the N-terminal regulatory domain activates the methylesterase activity.

It localises to the cytoplasm. The catalysed reaction is [protein]-L-glutamate 5-O-methyl ester + H2O = L-glutamyl-[protein] + methanol + H(+). It carries out the reaction L-glutaminyl-[protein] + H2O = L-glutamyl-[protein] + NH4(+). Functionally, involved in chemotaxis. Part of a chemotaxis signal transduction system that modulates chemotaxis in response to various stimuli. Catalyzes the demethylation of specific methylglutamate residues introduced into the chemoreceptors (methyl-accepting chemotaxis proteins or MCP) by CheR. Also mediates the irreversible deamidation of specific glutamine residues to glutamic acid. The sequence is that of Protein-glutamate methylesterase/protein-glutamine glutaminase 2 from Xanthomonas axonopodis pv. citri (strain 306).